The chain runs to 556 residues: Probable Xaa-Pro aminopeptidase SS1G_06948 (556 aa).

Mn(2+) is bound by residues Asp305, Asp316, Glu460, and Glu501.

The protein belongs to the peptidase M24B family. Mn(2+) serves as cofactor.

It catalyses the reaction Release of any N-terminal amino acid, including proline, that is linked to proline, even from a dipeptide or tripeptide.. Its function is as follows. Catalyzes the removal of a penultimate prolyl residue from the N-termini of peptides. The polypeptide is Probable Xaa-Pro aminopeptidase SS1G_06948 (Sclerotinia sclerotiorum (strain ATCC 18683 / 1980 / Ss-1) (White mold)).